Consider the following 734-residue polypeptide: Subtilisin-like protease SBT3.2 (734 aa).

Positions 1–19 (MTRALILVAICLMLTLNNA) are cleaved as a signal peptide. A propeptide spans 20 to 88 (AETKVHIVYL…ESTLRFYELQ (69 aa)) (activation peptide). Residues 92 to 581 (TWDYLQHTSK…GGVVNSEKAA (490 aa)) enclose the Peptidase S8 domain. Asn108 carries an N-linked (GlcNAc...) asparagine glycan. Asp122 functions as the Charge relay system in the catalytic mechanism. The N-linked (GlcNAc...) asparagine glycan is linked to Asn143. The Charge relay system role is filled by His179. Residues Asn326 and Asn355 are each glycosylated (N-linked (GlcNAc...) asparagine). Residues 361–438 (VCEDLAKNPA…ELGTDILFYI (78 aa)) enclose the PA domain. The N-linked (GlcNAc...) asparagine glycan is linked to Asn497. Ser512 acts as the Charge relay system in catalysis. Asn669 carries an N-linked (GlcNAc...) asparagine glycan.

The protein belongs to the peptidase S8 family.

It localises to the secreted. In Arabidopsis thaliana (Mouse-ear cress), this protein is Subtilisin-like protease SBT3.2.